Consider the following 270-residue polypeptide: Formamidopyrimidine-DNA glycosylase (270 aa).

Catalysis depends on P2, which acts as the Schiff-base intermediate with DNA. The Proton donor role is filled by E3. The Proton donor; for beta-elimination activity role is filled by K58. H90, R109, and R152 together coordinate DNA. The FPG-type zinc finger occupies 237 to 270 (RVYGREGEACECGGAIVRVVQSGRSTFYCRKCQR). R260 acts as the Proton donor; for delta-elimination activity in catalysis.

The protein belongs to the FPG family. Monomer. Zn(2+) is required as a cofactor.

It catalyses the reaction Hydrolysis of DNA containing ring-opened 7-methylguanine residues, releasing 2,6-diamino-4-hydroxy-5-(N-methyl)formamidopyrimidine.. The catalysed reaction is 2'-deoxyribonucleotide-(2'-deoxyribose 5'-phosphate)-2'-deoxyribonucleotide-DNA = a 3'-end 2'-deoxyribonucleotide-(2,3-dehydro-2,3-deoxyribose 5'-phosphate)-DNA + a 5'-end 5'-phospho-2'-deoxyribonucleoside-DNA + H(+). In terms of biological role, involved in base excision repair of DNA damaged by oxidation or by mutagenic agents. Acts as a DNA glycosylase that recognizes and removes damaged bases. Has a preference for oxidized purines, such as 7,8-dihydro-8-oxoguanine (8-oxoG). Has AP (apurinic/apyrimidinic) lyase activity and introduces nicks in the DNA strand. Cleaves the DNA backbone by beta-delta elimination to generate a single-strand break at the site of the removed base with both 3'- and 5'-phosphates. In Sphingopyxis alaskensis (strain DSM 13593 / LMG 18877 / RB2256) (Sphingomonas alaskensis), this protein is Formamidopyrimidine-DNA glycosylase.